The chain runs to 250 residues: 3-deoxy-manno-octulosonate cytidylyltransferase (250 aa).

This sequence belongs to the KdsB family.

It localises to the cytoplasm. The enzyme catalyses 3-deoxy-alpha-D-manno-oct-2-ulosonate + CTP = CMP-3-deoxy-beta-D-manno-octulosonate + diphosphate. The protein operates within nucleotide-sugar biosynthesis; CMP-3-deoxy-D-manno-octulosonate biosynthesis; CMP-3-deoxy-D-manno-octulosonate from 3-deoxy-D-manno-octulosonate and CTP: step 1/1. It functions in the pathway bacterial outer membrane biogenesis; lipopolysaccharide biosynthesis. In terms of biological role, activates KDO (a required 8-carbon sugar) for incorporation into bacterial lipopolysaccharide in Gram-negative bacteria. The polypeptide is 3-deoxy-manno-octulosonate cytidylyltransferase (Rhizobium meliloti (strain 1021) (Ensifer meliloti)).